A 212-amino-acid chain; its full sequence is Ribosomal RNA large subunit methyltransferase E (212 aa).

The S-adenosyl-L-methionine site is built by G56, W58, D78, D94, and D117. K157 functions as the Proton acceptor in the catalytic mechanism.

The protein belongs to the class I-like SAM-binding methyltransferase superfamily. RNA methyltransferase RlmE family.

It is found in the cytoplasm. It catalyses the reaction uridine(2552) in 23S rRNA + S-adenosyl-L-methionine = 2'-O-methyluridine(2552) in 23S rRNA + S-adenosyl-L-homocysteine + H(+). Its function is as follows. Specifically methylates the uridine in position 2552 of 23S rRNA at the 2'-O position of the ribose in the fully assembled 50S ribosomal subunit. The polypeptide is Ribosomal RNA large subunit methyltransferase E (Ehrlichia chaffeensis (strain ATCC CRL-10679 / Arkansas)).